The sequence spans 244 residues: tRNA (guanine-N(1)-)-methyltransferase (244 aa).

S-adenosyl-L-methionine-binding positions include Gly113 and 133–138; that span reads IGDYVL.

Belongs to the RNA methyltransferase TrmD family. As to quaternary structure, homodimer.

Its subcellular location is the cytoplasm. The enzyme catalyses guanosine(37) in tRNA + S-adenosyl-L-methionine = N(1)-methylguanosine(37) in tRNA + S-adenosyl-L-homocysteine + H(+). Its function is as follows. Specifically methylates guanosine-37 in various tRNAs. The polypeptide is tRNA (guanine-N(1)-)-methyltransferase (Bacillus anthracis (strain A0248)).